Here is a 156-residue protein sequence, read N- to C-terminus: Small ribosomal subunit protein uS7 (156 aa).

It belongs to the universal ribosomal protein uS7 family. In terms of assembly, part of the 30S ribosomal subunit. Contacts proteins S9 and S11.

In terms of biological role, one of the primary rRNA binding proteins, it binds directly to 16S rRNA where it nucleates assembly of the head domain of the 30S subunit. Is located at the subunit interface close to the decoding center, probably blocks exit of the E-site tRNA. This is Small ribosomal subunit protein uS7 from Acinetobacter baumannii (strain AB307-0294).